Here is a 521-residue protein sequence, read N- to C-terminus: Cytochrome P450 1A1 (521 aa).

Position 229 (Phe229) interacts with substrate. Cys463 serves as a coordination point for heme.

This sequence belongs to the cytochrome P450 family. It depends on heme as a cofactor.

The protein localises to the endoplasmic reticulum membrane. The protein resides in the microsome membrane. The enzyme catalyses an organic molecule + reduced [NADPH--hemoprotein reductase] + O2 = an alcohol + oxidized [NADPH--hemoprotein reductase] + H2O + H(+). Functionally, cytochromes P450 are a group of heme-thiolate monooxygenases. They oxidize a variety of structurally unrelated compounds, including steroids, fatty acids, and xenobiotics. The chain is Cytochrome P450 1A1 (cyp1a1) from Oryzias latipes (Japanese rice fish).